Reading from the N-terminus, the 339-residue chain is Ketol-acid reductoisomerase (NADP(+)) (339 aa).

In terms of domain architecture, KARI N-terminal Rossmann spans 1-182; the sequence is MRVYYDRDAD…GGGRAGIIET (182 aa). NADP(+)-binding positions include 24-27, arginine 48, serine 51, threonine 53, and 83-86; these read YGSQ and DELQ. The active site involves histidine 108. NADP(+) is bound at residue glycine 134. The 146-residue stretch at 183 to 328 folds into the KARI C-terminal knotted domain; it reads TFKEECETDL…AKLRGMMPWI (146 aa). Mg(2+) contacts are provided by aspartate 191, glutamate 195, glutamate 227, and glutamate 231. Serine 252 is a binding site for substrate.

Belongs to the ketol-acid reductoisomerase family. Mg(2+) is required as a cofactor.

The enzyme catalyses (2R)-2,3-dihydroxy-3-methylbutanoate + NADP(+) = (2S)-2-acetolactate + NADPH + H(+). It catalyses the reaction (2R,3R)-2,3-dihydroxy-3-methylpentanoate + NADP(+) = (S)-2-ethyl-2-hydroxy-3-oxobutanoate + NADPH + H(+). It participates in amino-acid biosynthesis; L-isoleucine biosynthesis; L-isoleucine from 2-oxobutanoate: step 2/4. It functions in the pathway amino-acid biosynthesis; L-valine biosynthesis; L-valine from pyruvate: step 2/4. Its function is as follows. Involved in the biosynthesis of branched-chain amino acids (BCAA). Catalyzes an alkyl-migration followed by a ketol-acid reduction of (S)-2-acetolactate (S2AL) to yield (R)-2,3-dihydroxy-isovalerate. In the isomerase reaction, S2AL is rearranged via a Mg-dependent methyl migration to produce 3-hydroxy-3-methyl-2-ketobutyrate (HMKB). In the reductase reaction, this 2-ketoacid undergoes a metal-dependent reduction by NADPH to yield (R)-2,3-dihydroxy-isovalerate. The polypeptide is Ketol-acid reductoisomerase (NADP(+)) (Methylobacterium radiotolerans (strain ATCC 27329 / DSM 1819 / JCM 2831 / NBRC 15690 / NCIMB 10815 / 0-1)).